Consider the following 143-residue polypeptide: 3-hydroxyacyl-[acyl-carrier-protein] dehydratase FabZ (143 aa).

His-47 is a catalytic residue.

This sequence belongs to the thioester dehydratase family. FabZ subfamily.

The protein localises to the cytoplasm. The catalysed reaction is a (3R)-hydroxyacyl-[ACP] = a (2E)-enoyl-[ACP] + H2O. Functionally, involved in unsaturated fatty acids biosynthesis. Catalyzes the dehydration of short chain beta-hydroxyacyl-ACPs and long chain saturated and unsaturated beta-hydroxyacyl-ACPs. This is 3-hydroxyacyl-[acyl-carrier-protein] dehydratase FabZ from Moorella thermoacetica (strain ATCC 39073 / JCM 9320).